The following is a 294-amino-acid chain: tRNA pseudouridine synthase B (294 aa).

Catalysis depends on aspartate 40, which acts as the Nucleophile.

This sequence belongs to the pseudouridine synthase TruB family. Type 1 subfamily.

It carries out the reaction uridine(55) in tRNA = pseudouridine(55) in tRNA. In terms of biological role, responsible for synthesis of pseudouridine from uracil-55 in the psi GC loop of transfer RNAs. This chain is tRNA pseudouridine synthase B, found in Synechococcus elongatus (strain ATCC 33912 / PCC 7942 / FACHB-805) (Anacystis nidulans R2).